The chain runs to 129 residues: MSNVPAELKYSKEHEWLRKEAEGTYTVGITEHAQELLGDMVFVDLPEVGATVEAGADCAVAESVKAASDIYAPISGEIVAVNEELNDSPELVNSDPYTDGWIFKIKASDEAQVAALLDAAAYEALLEDE.

One can recognise a Lipoyl-binding domain in the interval 24–106 (TYTVGITEHA…YTDGWIFKIK (83 aa)). Lys65 carries the N6-lipoyllysine modification.

It belongs to the GcvH family. As to quaternary structure, the glycine cleavage system is composed of four proteins: P, T, L and H. (R)-lipoate is required as a cofactor.

Its function is as follows. The glycine cleavage system catalyzes the degradation of glycine. The H protein shuttles the methylamine group of glycine from the P protein to the T protein. In Klebsiella pneumoniae subsp. pneumoniae (strain ATCC 700721 / MGH 78578), this protein is Glycine cleavage system H protein.